A 25-amino-acid polypeptide reads, in one-letter code: Caerin 2.1 (25 aa).

Expressed by the skin dorsal glands.

It is found in the secreted. Its function is as follows. Antibacterial peptide with narrow spectrum of activity. Active against the Gram-negative bacterium P.multocida (MIC=25 ug/ml). Inhibits the formation of NO by neuronal nitric oxide synthase with an IC(50) of 9 ug/ml. The protein is Caerin 2.1 of Litoria peronii (Emerald spotted tree frog).